Consider the following 440-residue polypeptide: Transposon Ty1-PR2 Gag polyprotein (440 aa).

Composition is skewed to polar residues over residues 1–10, 48–60, and 127–152; these read MESQQLSNYP, TKAN…TPAS, and QSQF…GNTF. Disordered stretches follow at residues 1–93, 126–173, and 352–440; these read MESQ…MMTQ, PQSQ…RPPP, and GSRN…PETY. Positions 153 to 165 are enriched in low complexity; the sequence is TDSSSADSDMTST. The interval 299 to 401 is RNA-binding; it reads NNGIHINNKV…NSKSKTARAH (103 aa). The segment covering 402-418 has biased composition (low complexity); it reads NVSTSNNSPSTDNDSIS. Serine 416 carries the post-translational modification Phosphoserine. A compositionally biased stretch (polar residues) spans 419 to 428; sequence KSTTEPIQLN. Residues 429–440 are compositionally biased toward basic and acidic residues; the sequence is NKHDLHLRPETY.

In terms of assembly, homotrimer.

The protein resides in the cytoplasm. In terms of biological role, capsid protein (CA) is the structural component of the virus-like particle (VLP), forming the shell that encapsulates the retrotransposons dimeric RNA genome. The particles are assembled from trimer-clustered units and there are holes in the capsid shells that allow for the diffusion of macromolecules. CA also has nucleocapsid-like chaperone activity, promoting primer tRNA(i)-Met annealing to the multipartite primer-binding site (PBS), dimerization of Ty1 RNA and initiation of reverse transcription. This is Transposon Ty1-PR2 Gag polyprotein (TY1A-PR2) from Saccharomyces cerevisiae (strain ATCC 204508 / S288c) (Baker's yeast).